The chain runs to 201 residues: Increased recombination centers protein 21 (201 aa).

Residues 122–200 enclose the Cytochrome b5 heme-binding domain; that stretch reads PLRINRKIVK…LQVCFIGVVC (79 aa). Heme is bound by residues H158 and H182.

Belongs to the cytochrome b5 family.

Its function is as follows. Involved in resistance to carboplatin and cisplatin. Is probably involved in a pathway contributing to genomic integrity. In Saccharomyces cerevisiae (strain ATCC 204508 / S288c) (Baker's yeast), this protein is Increased recombination centers protein 21 (IRC21).